Here is a 39-residue protein sequence, read N- to C-terminus: Conotoxin ArMSGL-013 (39 aa).

A propeptide spanning residues 1–5 (RRSLT) is cleaved from the precursor. 3 cysteine pairs are disulfide-bonded: cysteine 12/cysteine 24, cysteine 16/cysteine 33, and cysteine 23/cysteine 37. Tryptophan 38 is subject to Tryptophan amide.

It belongs to the conotoxin O3 superfamily. In terms of tissue distribution, expressed by the venom duct.

The protein localises to the secreted. The sequence is that of Conotoxin ArMSGL-013 from Conus arenatus (Sand-dusted cone).